A 489-amino-acid polypeptide reads, in one-letter code: Mitochondrial-processing peptidase subunit beta (489 aa).

The N-terminal 45 residues, 1-45 (MAAAAARVVLLPAARRRLWGFSESLLIRGAAGRSSYFGENRLRST), are a transit peptide targeting the mitochondrion. His101 contributes to the Zn(2+) binding site. Glu104 (proton acceptor) is an active-site residue. Zn(2+) is bound by residues His105 and Glu181.

This sequence belongs to the peptidase M16 family. As to quaternary structure, heterodimer of PMPCA (alpha) and PMPCB (beta) subunits, forming the mitochondrial processing protease (MPP) in which PMPCA is involved in substrate recognition and binding and PMPCB is the catalytic subunit. Requires Zn(2+) as cofactor.

It is found in the mitochondrion matrix. The catalysed reaction is Release of N-terminal transit peptides from precursor proteins imported into the mitochondrion, typically with Arg in position P2.. Its activity is regulated as follows. Binding to PMPCA is required for catalytic activity. Catalytic subunit of the essential mitochondrial processing protease (MPP), which cleaves the mitochondrial sequence off newly imported precursors proteins. Preferentially, cleaves after an arginine at position P2. Required for PINK1 turnover by coupling PINK1 mitochondrial import and cleavage, which results in subsequent PINK1 proteolysis. The polypeptide is Mitochondrial-processing peptidase subunit beta (PMPCB) (Pongo abelii (Sumatran orangutan)).